The primary structure comprises 156 residues: Cyclic pyranopterin monophosphate synthase (156 aa).

Substrate is bound by residues 73 to 75 (LCH) and 110 to 111 (ME). The active site involves Asp125.

Belongs to the MoaC family. As to quaternary structure, homohexamer; trimer of dimers.

It catalyses the reaction (8S)-3',8-cyclo-7,8-dihydroguanosine 5'-triphosphate = cyclic pyranopterin phosphate + diphosphate. The protein operates within cofactor biosynthesis; molybdopterin biosynthesis. In terms of biological role, catalyzes the conversion of (8S)-3',8-cyclo-7,8-dihydroguanosine 5'-triphosphate to cyclic pyranopterin monophosphate (cPMP). The sequence is that of Cyclic pyranopterin monophosphate synthase from Pseudomonas putida (strain W619).